A 726-amino-acid chain; its full sequence is MAPAKWLIASLAFASTGLAFTPEDFISAPRRGEAIPDPKGQFAVFPVSKYNFDTKDRPSGWNLLNLKTGDISVLTTDADVSEITWLGEGTNLLYVNGTDSVKGGVGIWISDAKNFGNAYKAGSIPGAFQGFKLAKSGDKINFVGYGQSTTKGDLYNEAAIEKPVSSARIYDSLFVRHWDAYVGTQFNAVFSGALTKNGNKYSFDGKLKNLVQPVKYAESPYPPFGGSGDYDLSPDGKTVAFMSKAPELPKANLTTSYIFTVPHDGSKVAEPINKRNGPRTPHGIEGASSSPVFSPDSKRIAYLQMATKNYESDRRVIHIAEVGSNKPAQRIASNWDRSPESIKWSSDGRTLYVTAEEHATGKLFTLPSDARDNHMPSAVKHDGSVSAFSFVGSSKSVLITGNSLWSNALYQIATPGRPNRKLFYANEHDPQLKGLGPNDIEPLWVDGARTKIHSWIVKPTGFDKNKVYPLAFLIHGGPQGSWGDNWSTRWNPRVWADQGYVVIAPNPTGSTGFGQKLTDDITNDWGGAPYKDLFKIWEHVRDNLKYVDTDNGIAAGASFGGFMINWIQGQELGRKFKALVSHDGTFVGSSKIGTDELFFIEHDFNGTFFEARQNYDRWDCSKPEYVAKWSTPQLVVHSDYDFRLSVAEGVGLFNVLQEKGVPSRLLNFPDESHWVTKPENSLVWHQQVLGWINKFSGINKSNPKAIKLSDCKVEVIDHEAGSYFDY.

Positions 1–19 (MAPAKWLIASLAFASTGLA) are cleaved as a signal peptide. N-linked (GlcNAc...) asparagine glycans are attached at residues asparagine 96 and asparagine 252. A disordered region spans residues 268–292 (VAEPINKRNGPRTPHGIEGASSSPV). The N-linked (GlcNAc...) asparagine glycan is linked to asparagine 485. The active-site Charge relay system is the serine 558. A glycan (N-linked (GlcNAc...) asparagine) is linked at asparagine 605. Residues aspartate 641 and histidine 673 each act as charge relay system in the active site. N-linked (GlcNAc...) asparagine glycosylation is present at asparagine 699.

It belongs to the peptidase S9C family.

Its subcellular location is the secreted. Its function is as follows. Extracellular dipeptidyl-peptidase which removes N-terminal dipeptides sequentially from polypeptides having unsubstituted N-termini. Contributes to pathogenicity. In Arthroderma otae (strain ATCC MYA-4605 / CBS 113480) (Microsporum canis), this protein is Dipeptidyl-peptidase 5 (DPP5).